The primary structure comprises 200 residues: NADH-quinone oxidoreductase subunit C (200 aa).

The protein belongs to the complex I 30 kDa subunit family. As to quaternary structure, NDH-1 is composed of 14 different subunits. Subunits NuoB, C, D, E, F, and G constitute the peripheral sector of the complex.

It localises to the cell inner membrane. The enzyme catalyses a quinone + NADH + 5 H(+)(in) = a quinol + NAD(+) + 4 H(+)(out). NDH-1 shuttles electrons from NADH, via FMN and iron-sulfur (Fe-S) centers, to quinones in the respiratory chain. The immediate electron acceptor for the enzyme in this species is believed to be ubiquinone. Couples the redox reaction to proton translocation (for every two electrons transferred, four hydrogen ions are translocated across the cytoplasmic membrane), and thus conserves the redox energy in a proton gradient. This is NADH-quinone oxidoreductase subunit C from Thiobacillus denitrificans (strain ATCC 25259 / T1).